A 2522-amino-acid chain; its full sequence is Unconventional myosin-IXAa (2522 aa).

Residues 15–113 (SELTLRIYPG…YRFLLREKNL (99 aa)) enclose the Ras-associating domain. Positions 147-1007 (KDFDDLCNLP…ERQRLQDLLH (861 aa)) constitute a Myosin motor domain. A helical membrane pass occupies residues 176-196 (IYTYVGSILIVINPFKFLPIY). 240–247 (GESGSGKT) contributes to the ATP binding site. Positions 767-802 (VNRRNPRTPLSDLQGSNAINQREGWNGRPGRQNRLS) are disordered. Residues 777-786 (SDLQGSNAIN) are compositionally biased toward polar residues. The actin-binding stretch occupies residues 888 to 910 (LNKLMETLGQSQPYFVKCIRSNS). IQ domains lie at 1012–1039 (SRIV…AACQ), 1063–1092 (QEGA…ASVL), 1102–1131 (QRRA…ATIR), and 1125–1154 (QRDA…QRLK). The neck or regulatory domain stretch occupies residues 1012 to 1149 (SRIVYLQRRF…LARQRFRELQ (138 aa)). Residues 1150–2497 (KQRLKITHLP…LQGAKSSPQR (1348 aa)) are tail. 6 disordered regions span residues 1218–1254 (GMAP…RRMR), 1318–1409 (DKAP…STRR), 1424–1612 (NEAD…GNIF), 1630–1754 (NQEK…GRVR), 1799–1827 (RLSP…VKRR), and 1962–1983 (LDSS…KDTD). Positions 1229–1242 (TIRERPRTLEDPNQ) are enriched in basic and acidic residues. Composition is skewed to polar residues over residues 1330-1349 (SPSS…STPD) and 1366-1390 (SLPT…NSVT). Composition is skewed to basic and acidic residues over residues 1399-1408 (PSKDKKESTR) and 1426-1435 (ADVKPLEVKD). Residues 1437–1454 (AAQTSEPPSPAQPSTDSS) show a composition bias toward polar residues. Residues 1456–1525 (VLEKLEKLNE…LRRIEQSRQE (70 aa)) adopt a coiled-coil conformation. 4 stretches are compositionally biased toward basic and acidic residues: residues 1458 to 1484 (EKLE…EMME), 1492 to 1523 (ILEE…EQSR), 1549 to 1566 (PARE…RPKD), and 1580 to 1589 (LESRGDEARS). 2 stretches are compositionally biased toward polar residues: residues 1594–1604 (KPSNQNVNISM) and 1631–1641 (QEKTPGAQNEV). Basic residues predominate over residues 1656–1665 (PGHKKARMAR). The segment covering 1681 to 1690 (GESEEEEYDE) has biased composition (acidic residues). Basic and acidic residues-rich tracts occupy residues 1738 to 1753 (LGKH…DGRV) and 1810 to 1822 (LQRE…EPSP). Residues 1990–2039 (GHIFKSTQYSIPTYCEYCSSLIWMMDKACVCKLCRYACHRKCCQKMTTKC) form a Phorbol-ester/DAG-type zinc finger. Positions 2054 to 2242 (VELSRLTNDE…LIICEQMNKY (189 aa)) constitute a Rho-GAP domain. Disordered regions lie at residues 2274–2325 (PVHR…QEEK) and 2348–2522 (LEPR…EFMV). Residues 2317–2344 (QVAMQQEEKVLTEQIESLQKEKEELTFE) are a coiled coil. The segment covering 2366-2383 (TADSSENLNVDSEGATSD) has biased composition (polar residues). Positions 2413–2429 (SLDSIDSCSTVSSVSSS) are enriched in low complexity. Residues 2436-2448 (RTHKLSLRSKSPS) are compositionally biased toward basic residues. The segment covering 2497 to 2506 (RHREQKKDPE) has biased composition (basic and acidic residues).

This sequence belongs to the TRAFAC class myosin-kinesin ATPase superfamily. Myosin family.

Its subcellular location is the membrane. The protein localises to the cytoplasm. The protein resides in the synapse. It localises to the cell projection. It is found in the growth cone. In terms of biological role, myosins are actin-based motor molecules with ATPase activity. Unconventional myosins serve in intracellular movements. Regulates Rho by stimulating it's GTPase activity in neurons. Required for the regulation of neurite branching and motor neuron axon guidance. The protein is Unconventional myosin-IXAa (myo9aa) of Danio rerio (Zebrafish).